We begin with the raw amino-acid sequence, 90 residues long: MFKLCVFVALLSLAAAAPAPAPAPAPAPGLIGPGIVAPGIWGPTVVGSPLLAPQVVSVVPGAISHAAITQVHPSPLLIKSVHGLGPVVIG.

The signal sequence occupies residues 1 to 16; it reads MFKLCVFVALLSLAAA. 2 consecutive propeptides follow at residues 17 to 54 and 67 to 79; these read APAPAPAPAPAPGLIGPGIVAPGIWGPTVVGSPLLAPQ and AITQVHPSPLLIK. Position 89 is an isoleucine amide (I89).

It localises to the secreted. This chain is Neuropeptide-like 3 (Nplp3), found in Drosophila melanogaster (Fruit fly).